The primary structure comprises 229 residues: Orotidine 5'-phosphate decarboxylase (229 aa).

Substrate contacts are provided by residues Asp-10, Lys-32, 59-68 (DLKFHDIPNT), Thr-119, Arg-180, Gln-189, Gly-209, and Arg-210. Lys-61 serves as the catalytic Proton donor.

This sequence belongs to the OMP decarboxylase family. Type 1 subfamily. As to quaternary structure, homodimer.

It carries out the reaction orotidine 5'-phosphate + H(+) = UMP + CO2. It participates in pyrimidine metabolism; UMP biosynthesis via de novo pathway; UMP from orotate: step 2/2. Functionally, catalyzes the decarboxylation of orotidine 5'-monophosphate (OMP) to uridine 5'-monophosphate (UMP). The chain is Orotidine 5'-phosphate decarboxylase from Legionella pneumophila (strain Lens).